Reading from the N-terminus, the 232-residue chain is Orotidine 5'-phosphate decarboxylase (232 aa).

Residues D11, K33, 60–69, T119, R180, Q189, G209, and R210 contribute to the substrate site; that span reads DLKLYDIPNT. The active-site Proton donor is the K62.

Belongs to the OMP decarboxylase family. Type 1 subfamily. As to quaternary structure, homodimer.

It catalyses the reaction orotidine 5'-phosphate + H(+) = UMP + CO2. Its pathway is pyrimidine metabolism; UMP biosynthesis via de novo pathway; UMP from orotate: step 2/2. In terms of biological role, catalyzes the decarboxylation of orotidine 5'-monophosphate (OMP) to uridine 5'-monophosphate (UMP). The sequence is that of Orotidine 5'-phosphate decarboxylase from Wigglesworthia glossinidia brevipalpis.